We begin with the raw amino-acid sequence, 46 residues long: GTP cyclohydrolase 1 (46 aa).

Cysteine 7 contributes to the Zn(2+) binding site.

This sequence belongs to the GTP cyclohydrolase I family. As to quaternary structure, homomer.

The enzyme catalyses GTP + H2O = 7,8-dihydroneopterin 3'-triphosphate + formate + H(+). The protein operates within cofactor biosynthesis; 7,8-dihydroneopterin triphosphate biosynthesis; 7,8-dihydroneopterin triphosphate from GTP: step 1/1. The sequence is that of GTP cyclohydrolase 1 (folE) from Bacillus pumilus (Bacillus mesentericus).